Consider the following 525-residue polypeptide: uncharacterized protein (525 aa).

Helical transmembrane passes span 36 to 56 (AVAA…TLAL) and 61 to 81 (ALPA…AAAI). The 56-residue stretch at 173-228 (SAVDIRLERTSADGPQFAHIYCEMTPLRDAEGNLLAIVAQSRDVSEEARLQAEAAA) folds into the PAC domain. Residues 246-466 (AVSHELRTPL…VIVVTIPSDA (221 aa)) form the Histidine kinase domain. The residue at position 249 (His-249) is a Phosphohistidine; by autocatalysis. Positions 506–525 (LHTGEIGREGGHGAAQAKTA) are disordered.

The protein localises to the cell membrane. The enzyme catalyses ATP + protein L-histidine = ADP + protein N-phospho-L-histidine.. This is an uncharacterized protein from Rhizobium meliloti (strain 1021) (Ensifer meliloti).